A 204-amino-acid chain; its full sequence is Proteasome subunit beta type-3 (204 aa).

The protein belongs to the peptidase T1B family. The 26S proteasome consists of a 20S proteasome core and two 19S regulatory subunits. The 20S proteasome core is composed of 28 subunits that are arranged in four stacked rings, resulting in a barrel-shaped structure. The two end rings are each formed by seven alpha subunits, and the two central rings are each formed by seven beta subunits. The catalytic chamber with the active sites is on the inside of the barrel.

Its subcellular location is the cytoplasm. The protein resides in the nucleus. In terms of biological role, non-catalytic component of the proteasome, a multicatalytic proteinase complex which is characterized by its ability to cleave peptides with Arg, Phe, Tyr, Leu, and Glu adjacent to the leaving group at neutral or slightly basic pH. The proteasome has an ATP-dependent proteolytic activity. The polypeptide is Proteasome subunit beta type-3 (pbs-3) (Caenorhabditis elegans).